We begin with the raw amino-acid sequence, 220 residues long: uncharacterized protein (220 aa).

An N-terminal signal peptide occupies residues 1-25; that stretch reads MSCGTYKRGSLTFLLVVALAVPVFC.

As to expression, nacreous layer of shell (at protein level). Expressed primarily in the mantle with highest level in the mantle pallium and lower level in the mantle edge.

It localises to the secreted. This is an uncharacterized protein from Margaritifera margaritifera (Freshwater pearl mussel).